A 72-amino-acid chain; its full sequence is Prophage late control protein OgrK (72 aa).

In terms of biological role, cryptic version of the phage P2 OGR protein which acts as an activator of P2 late transcription. The protein is Prophage late control protein OgrK (ogrK) of Escherichia coli (strain K12).